A 100-amino-acid chain; its full sequence is Urease subunit gamma (100 aa).

Belongs to the urease gamma subunit family. Heterotrimer of UreA (gamma), UreB (beta) and UreC (alpha) subunits. Three heterotrimers associate to form the active enzyme.

The protein localises to the cytoplasm. It catalyses the reaction urea + 2 H2O + H(+) = hydrogencarbonate + 2 NH4(+). The protein operates within nitrogen metabolism; urea degradation; CO(2) and NH(3) from urea (urease route): step 1/1. The protein is Urease subunit gamma of Pseudarthrobacter chlorophenolicus (strain ATCC 700700 / DSM 12829 / CIP 107037 / JCM 12360 / KCTC 9906 / NCIMB 13794 / A6) (Arthrobacter chlorophenolicus).